A 393-amino-acid polypeptide reads, in one-letter code: S-adenosylmethionine synthase (393 aa).

E9 lines the Mg(2+) pocket. H15 serves as a coordination point for ATP. E43 lines the K(+) pocket. Residues E56 and Q99 each coordinate L-methionine. Residues 167–169 (DGK), 235–238 (SGRF), D246, 252–253 (RK), A269, K273, and K277 each bind ATP. D246 is a binding site for L-methionine. Residue K277 participates in L-methionine binding.

It belongs to the AdoMet synthase family. Homotetramer. Requires Mn(2+) as cofactor. The cofactor is Mg(2+). It depends on Co(2+) as a cofactor. K(+) is required as a cofactor.

It is found in the cytoplasm. The catalysed reaction is L-methionine + ATP + H2O = S-adenosyl-L-methionine + phosphate + diphosphate. The protein operates within amino-acid biosynthesis; S-adenosyl-L-methionine biosynthesis; S-adenosyl-L-methionine from L-methionine: step 1/1. Its function is as follows. Catalyzes the formation of S-adenosylmethionine from methionine and ATP. The reaction comprises two steps that are both catalyzed by the same enzyme: formation of S-adenosylmethionine (AdoMet) and triphosphate, and subsequent hydrolysis of the triphosphate. The protein is S-adenosylmethionine synthase (SAMS) of Litchi chinensis (Lychee).